We begin with the raw amino-acid sequence, 143 residues long: Zinc-containing ferredoxin (143 aa).

Positions 13–60 (PIDEHFLENDKDYPVTGQHNGHDVRAEGMQRLDADGKPYPTKLGIHGT) are N-terminal extension. Zn(2+) is bound by residues histidine 31, histidine 34, and histidine 58. 2 4Fe-4S ferredoxin-type domains span residues 60-89 (THVA…WNLN) and 115-143 (KCDP…KITP). [3Fe-4S] cluster contacts are provided by cysteine 69 and cysteine 75. [4Fe-4S] cluster is bound at residue cysteine 79. Aspartate 117 is a binding site for Zn(2+). [4Fe-4S] cluster-binding residues include cysteine 124, cysteine 127, and cysteine 130. A [3Fe-4S] cluster-binding site is contributed by cysteine 134.

Requires [3Fe-4S] cluster as cofactor. [4Fe-4S] cluster is required as a cofactor. The cofactor is Zn(2+).

Ferredoxins are iron-sulfur proteins that transfer electrons in a wide variety of metabolic reactions. The chain is Zinc-containing ferredoxin (zfx) from Thermoplasma acidophilum (strain ATCC 25905 / DSM 1728 / JCM 9062 / NBRC 15155 / AMRC-C165).